We begin with the raw amino-acid sequence, 134 residues long: MVFTSSESSSLLSSLKMTCSMVSMNSLEQISLIKGVPPFFTHILVSFQEDNWVFGLSAVLRILFFIQRIESLGFTLLDLNTSEISNAMGRSRSPLGMLSLVACSINASNSLGVLTDILFLVLYSLLIHLSKKKS.

Residues 110-130 (SLGVLTDILFLVLYSLLIHLS) form a helical membrane-spanning segment.

The protein localises to the membrane. This is an uncharacterized protein from Saccharomyces cerevisiae (strain ATCC 204508 / S288c) (Baker's yeast).